The chain runs to 132 residues: Ribonuclease VapC (132 aa).

The PINc domain maps to 4 to 123 (YMLDTNIVIY…SNNLREFERV (120 aa)). Mg(2+) contacts are provided by D7 and D98.

The protein belongs to the PINc/VapC protein family. In terms of assembly, probably forms a complex with cognate antitoxin VapB2. It depends on Mg(2+) as a cofactor.

Its function is as follows. Toxic component of a type II toxin-antitoxin (TA) system. Acts as an RNase. Its toxic effect is neutralized by cognate antitoxin VapB2 but not by non-cognate antitoxin VapB1. This is Ribonuclease VapC from Haemophilus influenzae (strain 86-028NP).